Reading from the N-terminus, the 356-residue chain is Biotin synthase (356 aa).

Residues glycine 54 to leucine 278 enclose the Radical SAM core domain. [4Fe-4S] cluster is bound by residues cysteine 69, cysteine 73, and cysteine 76. Residues cysteine 113, cysteine 144, cysteine 204, and arginine 282 each coordinate [2Fe-2S] cluster.

The protein belongs to the radical SAM superfamily. Biotin synthase family. As to quaternary structure, homodimer. It depends on [4Fe-4S] cluster as a cofactor. [2Fe-2S] cluster is required as a cofactor.

The enzyme catalyses (4R,5S)-dethiobiotin + (sulfur carrier)-SH + 2 reduced [2Fe-2S]-[ferredoxin] + 2 S-adenosyl-L-methionine = (sulfur carrier)-H + biotin + 2 5'-deoxyadenosine + 2 L-methionine + 2 oxidized [2Fe-2S]-[ferredoxin]. It participates in cofactor biosynthesis; biotin biosynthesis; biotin from 7,8-diaminononanoate: step 2/2. Its function is as follows. Catalyzes the conversion of dethiobiotin (DTB) to biotin by the insertion of a sulfur atom into dethiobiotin via a radical-based mechanism. The sequence is that of Biotin synthase from Novosphingobium aromaticivorans (strain ATCC 700278 / DSM 12444 / CCUG 56034 / CIP 105152 / NBRC 16084 / F199).